Consider the following 602-residue polypeptide: Leucine-rich repeat-containing protein 40 (602 aa).

The interval 1-22 (MSRLKRIAGQDPRAGFKEGGRD) is disordered. At S71 the chain carries Phosphoserine. LRR repeat units lie at residues 83–104 (DLTK…LRLL), 106–127 (ALTV…IREL), 129–150 (NLQK…ITNL), 152–173 (NLKC…FEQF), 175–196 (NLED…FSSL), 198–219 (SLVR…INRM), 221–242 (RLKH…LAGM), 244–265 (SLEL…PSCS), 266–286 (LLKE…EHLK), 290–311 (SILV…IILL), 313–335 (SLER…GNLH), 336–356 (LKFL…IINK), 400–421 (TLKI…VFDA), 426–447 (IITS…MVEL), 450–472 (MVSD…CVLQ), 473–494 (KLTF…VESL), 496–517 (RLQT…LYRI), 519–540 (TLET…KMKM), 543–564 (NLTT…LGNC), and 566–586 (NLRT…AILM).

This Pongo abelii (Sumatran orangutan) protein is Leucine-rich repeat-containing protein 40 (LRRC40).